Here is a 311-residue protein sequence, read N- to C-terminus: Transmembrane protein 177 (311 aa).

At 1-17 (MAGPLWRTAAFVQRHRT) the chain is on the mitochondrial matrix side. The helical transmembrane segment at 18–38 (GLLVGSCAGLFGVPISYHLFP) threads the bilayer. Over 39–166 (DPVVQWLYQY…EVVYLESSTT (128 aa)) the chain is Mitochondrial intermembrane. Residues 167–187 (AVHALLAPACLAGTWALGVGA) form a helical membrane-spanning segment. Over 188-197 (KYTLGLHAGP) the chain is Mitochondrial matrix. Residues 198 to 218 (MNLRAAFSLVAAVAGFVAYAF) traverse the membrane as a helical segment. Over 219 to 311 (SQDSLTHAVE…WRGMLNPGRS (93 aa)) the chain is Mitochondrial intermembrane.

The protein belongs to the TMEM177 family. As to quaternary structure, found in a complex with COX20, COA6, MT-CO2/COX2, COX18, SCO1 and SCO2. Interacts with COX20. Interacts with COX1, MT-CO2/COX2, SCO1 and SCO2 in a COX20-dependent manner.

It localises to the mitochondrion inner membrane. Its function is as follows. Plays a role in the early steps of cytochrome c oxidase subunit II (MT-CO2/COX2) maturation and is required for the stabilization of COX20 and the newly synthesized MT-CO2/COX2 protein. The sequence is that of Transmembrane protein 177 (TMEM177) from Homo sapiens (Human).